The sequence spans 336 residues: Acetyl-coenzyme A carboxylase carboxyl transferase subunit alpha (336 aa).

One can recognise a CoA carboxyltransferase C-terminal domain in the interval 48–308 (ALEAKVESLR…KSMLIEELQG (261 aa)).

This sequence belongs to the AccA family. In terms of assembly, acetyl-CoA carboxylase is a heterohexamer composed of biotin carboxyl carrier protein (AccB), biotin carboxylase (AccC) and two subunits each of ACCase subunit alpha (AccA) and ACCase subunit beta (AccD).

The protein resides in the cytoplasm. It carries out the reaction N(6)-carboxybiotinyl-L-lysyl-[protein] + acetyl-CoA = N(6)-biotinyl-L-lysyl-[protein] + malonyl-CoA. The protein operates within lipid metabolism; malonyl-CoA biosynthesis; malonyl-CoA from acetyl-CoA: step 1/1. Component of the acetyl coenzyme A carboxylase (ACC) complex. First, biotin carboxylase catalyzes the carboxylation of biotin on its carrier protein (BCCP) and then the CO(2) group is transferred by the carboxyltransferase to acetyl-CoA to form malonyl-CoA. The protein is Acetyl-coenzyme A carboxylase carboxyl transferase subunit alpha of Chlorobaculum parvum (strain DSM 263 / NCIMB 8327) (Chlorobium vibrioforme subsp. thiosulfatophilum).